The sequence spans 167 residues: 2-C-methyl-D-erythritol 2,4-cyclodiphosphate synthase (167 aa).

A divalent metal cation contacts are provided by Asp-8 and His-10. 4-CDP-2-C-methyl-D-erythritol 2-phosphate-binding positions include 8–10 and 34–35; these read DIH and HS. His-42 is a binding site for a divalent metal cation. Residues 56 to 58 and Arg-142 each bind 4-CDP-2-C-methyl-D-erythritol 2-phosphate; that span reads DIG.

It belongs to the IspF family. Homotrimer. A divalent metal cation serves as cofactor.

It carries out the reaction 4-CDP-2-C-methyl-D-erythritol 2-phosphate = 2-C-methyl-D-erythritol 2,4-cyclic diphosphate + CMP. It functions in the pathway isoprenoid biosynthesis; isopentenyl diphosphate biosynthesis via DXP pathway; isopentenyl diphosphate from 1-deoxy-D-xylulose 5-phosphate: step 4/6. Functionally, involved in the biosynthesis of isopentenyl diphosphate (IPP) and dimethylallyl diphosphate (DMAPP), two major building blocks of isoprenoid compounds. Catalyzes the conversion of 4-diphosphocytidyl-2-C-methyl-D-erythritol 2-phosphate (CDP-ME2P) to 2-C-methyl-D-erythritol 2,4-cyclodiphosphate (ME-CPP) with a corresponding release of cytidine 5-monophosphate (CMP). The chain is 2-C-methyl-D-erythritol 2,4-cyclodiphosphate synthase from Buchnera aphidicola subsp. Schizaphis graminum (strain Sg).